The primary structure comprises 595 residues: Inactive glycosyltransferase 25 family member 3 (595 aa).

Residues 1–22 form the signal peptide; that stretch reads MRAARAAPLLQLLLLLGPWLEA. N-linked (GlcNAc...) asparagine glycosylation is found at Asn-75, Asn-153, Asn-237, and Asn-360. Residues 548 to 595 form a disordered region; it reads DTETSSPWDDDSGRLISWSGSQKTLRSPRLDLTGSSGHSLQPQPRDEL. Polar residues predominate over residues 580 to 589; sequence TGSSGHSLQP. Residues 592–595 carry the Prevents secretion from ER motif; the sequence is RDEL.

Belongs to the glycosyltransferase 25 family. As to expression, ubiquitous. Highly expressed in secretory and nervous tissues.

It is found in the endoplasmic reticulum lumen. Its function is as follows. Probable cell adhesion protein involved in leukocyte transmigration across the blood-brain barrier. Does not express any beta-galactosyltransferase activity in vitro. This Homo sapiens (Human) protein is Inactive glycosyltransferase 25 family member 3 (CERCAM).